The primary structure comprises 210 residues: Glutathione S-transferase P (210 aa).

The region spanning 2–81 is the GST N-terminal domain; it reads PPYTIVYFPV…HLGRSLGLYG (80 aa). A Phosphotyrosine; by EGFR modification is found at Y4. Residues Y8, R14, W39, K45, and 52-53 each bind glutathione; that span reads QL. At T62 the chain carries Phosphothreonine. A glutathione-binding site is contributed by 65–66; the sequence is QS. The GST C-terminal domain occupies 83-204; the sequence is DQKEAALVDM…SSPDHLNRPI (122 aa). 2 positions are modified to N6-succinyllysine: K103 and K116. The residue at position 128 (K128) is an N6-acetyllysine.

The protein belongs to the GST superfamily. Pi family. Homodimer. Interacts with CDK5. In terms of tissue distribution, present in kidney, lung, testis and placenta, very low levels in liver.

It is found in the cytoplasm. The protein resides in the mitochondrion. Its subcellular location is the nucleus. The enzyme catalyses RX + glutathione = an S-substituted glutathione + a halide anion + H(+). It carries out the reaction prostaglandin J2 + glutathione = prostaglandin J2-S-(R)-glutathione. It catalyses the reaction prostaglandin J2 + glutathione = prostaglandin J2-S-(S)-glutathione. The catalysed reaction is prostaglandin A2 + glutathione = prostaglandin A2-S-(S)-glutathione. The enzyme catalyses 11(S)-hydroxy-14(S),15(S)-epoxy-(5Z,8Z,12E)-eicosatrienoate + glutathione = (11S,15S)-dihydroxy-14(R)-S-glutathionyl-(5Z,8Z,12E)-eicosatrienoate. Functionally, conjugation of reduced glutathione to a wide number of exogenous and endogenous hydrophobic electrophiles. Involved in the formation of glutathione conjugates of both prostaglandin A2 (PGA2) and prostaglandin J2 (PGJ2). Participates in the formation of novel hepoxilin regioisomers. Negatively regulates CDK5 activity via p25/p35 translocation to prevent neurodegeneration. The chain is Glutathione S-transferase P from Rattus norvegicus (Rat).